Reading from the N-terminus, the 559-residue chain is DNA ligase (559 aa).

Residue Glu-247 participates in ATP binding. Lys-249 acts as the N6-AMP-lysine intermediate in catalysis. ATP contacts are provided by Arg-254, Arg-269, Glu-299, Phe-339, Arg-414, and Lys-420.

This sequence belongs to the ATP-dependent DNA ligase family. Mg(2+) is required as a cofactor.

The catalysed reaction is ATP + (deoxyribonucleotide)n-3'-hydroxyl + 5'-phospho-(deoxyribonucleotide)m = (deoxyribonucleotide)n+m + AMP + diphosphate.. It carries out the reaction NAD(+) + (deoxyribonucleotide)n-3'-hydroxyl + 5'-phospho-(deoxyribonucleotide)m = (deoxyribonucleotide)n+m + AMP + beta-nicotinamide D-nucleotide.. DNA ligase that seals nicks in double-stranded DNA during DNA replication, DNA recombination and DNA repair. Shows high activity with either ATP or NAD(+). The protein is DNA ligase of Thermococcus fumicolans.